The chain runs to 938 residues: Ankyrin repeat and LEM domain-containing protein 2 (938 aa).

Over 1 to 12 (MLWPRLAAAEWA) the chain is Lumenal. The helical; Signal-anchor for type III membrane protein transmembrane segment at 13-32 (ALAWELLGASVLLIAVRWLV) threads the bilayer. The Cytoplasmic segment spans residues 33–938 (RRLGPRPGGL…MARLAELAAL (906 aa)). The LEM domain occupies 69-113 (LARLKLLNPDDLREEIVKAGLKCGPITSTTRFIFEKKLAQALLEQ). Residues serine 259 and serine 268 each carry the phosphoserine modification. The ANK repeat unit spans residues 411-440 (GYDTPLHFACKFGNADVVNVLSSHHLIVKN). A phosphoserine mark is found at serine 488, serine 496, serine 512, and serine 528. The segment covering 609–627 (GKKAQQETGEREASCRDKA) has biased composition (basic and acidic residues). The interval 609 to 636 (GKKAQQETGEREASCRDKATTSGSNSIS) is disordered. Serine 662, serine 804, serine 896, and serine 914 each carry phosphoserine. The disordered stretch occupies residues 870 to 924 (RQSWPSPAVKGRFKSQLPDLSGPHSYSPGRNSVAGSNPAKPGLGSPGRYSPVHGS).

This sequence belongs to the ANKLE2 family. In terms of assembly, interacts with BAF/BANF1. Interacts with protein phosphatase 2A (PP2A) components PPP2C (PPP2CA or PPP2CB) and PPP2R1A. (Microbial infection) May interact with non-structural protein 4A/NS4A from Zika virus strains Mr-766 or French Polynesia 10087PF/2013; the interaction may inhibit ANKLE2 function and contribute to defects in brain development, such as microcephaly.

Its subcellular location is the endoplasmic reticulum membrane. Involved in mitotic nuclear envelope reassembly by promoting dephosphorylation of BAF/BANF1 during mitotic exit. Coordinates the control of BAF/BANF1 dephosphorylation by inhibiting VRK1 kinase and promoting dephosphorylation of BAF/BANF1 by protein phosphatase 2A (PP2A), thereby facilitating nuclear envelope assembly. May regulate nuclear localization of VRK1 in non-dividing cells. It is unclear whether it acts as a real PP2A regulatory subunit or whether it is involved in recruitment of the PP2A complex. Involved in brain development. The polypeptide is Ankyrin repeat and LEM domain-containing protein 2 (ANKLE2) (Homo sapiens (Human)).